Here is an 83-residue protein sequence, read N- to C-terminus: U5-theraphotoxin-Hs1a 3 (83 aa).

The first 21 residues, 1 to 21 (MKTSMFLTLTGLVLLFVVCYA), serve as a signal peptide directing secretion. Residues 22–49 (SESEEKDFPKELLSSIFAADSDFKVEER) constitute a propeptide that is removed on maturation. Intrachain disulfides connect Cys-51/Cys-63, Cys-56/Cys-68, and Cys-62/Cys-75.

Belongs to the neurotoxin 10 (Hwtx-1) family. 51 (Hntx-8) subfamily. Hntx-8 sub-subfamily. Expressed by the venom gland.

The protein resides in the secreted. Its function is as follows. Agglutinates erythrocytes. In Cyriopagopus schmidti (Chinese bird spider), this protein is U5-theraphotoxin-Hs1a 3.